The chain runs to 287 residues: 4-diphosphocytidyl-2-C-methyl-D-erythritol kinase (287 aa).

K11 is a catalytic residue. 93–103 (PFGAGLGGGSS) serves as a coordination point for ATP. D135 is an active-site residue.

Belongs to the GHMP kinase family. IspE subfamily.

It catalyses the reaction 4-CDP-2-C-methyl-D-erythritol + ATP = 4-CDP-2-C-methyl-D-erythritol 2-phosphate + ADP + H(+). It functions in the pathway isoprenoid biosynthesis; isopentenyl diphosphate biosynthesis via DXP pathway; isopentenyl diphosphate from 1-deoxy-D-xylulose 5-phosphate: step 3/6. In terms of biological role, catalyzes the phosphorylation of the position 2 hydroxy group of 4-diphosphocytidyl-2C-methyl-D-erythritol. This Chlorobium luteolum (strain DSM 273 / BCRC 81028 / 2530) (Pelodictyon luteolum) protein is 4-diphosphocytidyl-2-C-methyl-D-erythritol kinase.